A 348-amino-acid polypeptide reads, in one-letter code: tRNA N6-adenosine threonylcarbamoyltransferase (348 aa).

The Fe cation site is built by His-111 and His-115. Substrate contacts are provided by residues 134–138, Asp-167, Gly-180, and Asn-276; that span reads LVSGG. Asp-304 lines the Fe cation pocket.

Belongs to the KAE1 / TsaD family. Fe(2+) is required as a cofactor.

The protein resides in the cytoplasm. It carries out the reaction L-threonylcarbamoyladenylate + adenosine(37) in tRNA = N(6)-L-threonylcarbamoyladenosine(37) in tRNA + AMP + H(+). Its function is as follows. Required for the formation of a threonylcarbamoyl group on adenosine at position 37 (t(6)A37) in tRNAs that read codons beginning with adenine. Is involved in the transfer of the threonylcarbamoyl moiety of threonylcarbamoyl-AMP (TC-AMP) to the N6 group of A37, together with TsaE and TsaB. TsaD likely plays a direct catalytic role in this reaction. This chain is tRNA N6-adenosine threonylcarbamoyltransferase, found in Bordetella petrii (strain ATCC BAA-461 / DSM 12804 / CCUG 43448).